The primary structure comprises 65 residues: Temporin-SN1 (65 aa).

A signal peptide spans 1–22; that stretch reads MFTTKKSLLLLFFLGTINLSLC. Residues 23 to 44 constitute a propeptide, removed in mature form; the sequence is QEERNAEEERRDGDDEGGVEVQ. Lys-65 is subject to Lysine amide.

Belongs to the frog skin active peptide (FSAP) family. Temporin subfamily. In terms of tissue distribution, expressed by the skin glands.

The protein resides in the secreted. Its function is as follows. Antimicrobial peptide. Active against a variety of Gram-positive bacterial strains. Not active against Gram-negative bacteria and against fungi. Shows hemolytic activity against human erythrocytes. The chain is Temporin-SN1 from Sylvirana spinulosa (Fine-spined frog).